The sequence spans 206 residues: Small ribosomal subunit protein uS4 (206 aa).

One can recognise an S4 RNA-binding domain in the interval 96–160 (CRLDNVVYRM…AQLRIVQALE (65 aa)).

The protein belongs to the universal ribosomal protein uS4 family. Part of the 30S ribosomal subunit. Contacts protein S5. The interaction surface between S4 and S5 is involved in control of translational fidelity.

Functionally, one of the primary rRNA binding proteins, it binds directly to 16S rRNA where it nucleates assembly of the body of the 30S subunit. With S5 and S12 plays an important role in translational accuracy. This Pseudomonas putida (strain GB-1) protein is Small ribosomal subunit protein uS4.